Reading from the N-terminus, the 73-residue chain is MTVSIQMAGNLWKVHVKAGDQIEKGQEVAILESMKMEIPIVADRSGIVKEVKKKEGDFVNEGDVLLELSNSTQ.

The Biotinyl-binding domain maps to 2–69 (TVSIQMAGNL…NEGDVLLELS (68 aa)). Residue lysine 35 is modified to N6-biotinyllysine; alternate. The residue at position 35 (lysine 35) is an N6-lipoyllysine; alternate.

Post-translationally, can be both biotinylated and lipoylated on Lys-35 upon overexpression in E.coli depending on the growth medium; the nature of the modification in situ in B.subtilis is unknown.

The chain is Biotin/lipoyl attachment protein (yngHB) from Bacillus subtilis (strain 168).